The primary structure comprises 359 residues: Probable dual-specificity RNA methyltransferase RlmN (359 aa).

The active-site Proton acceptor is the glutamate 99. The Radical SAM core domain occupies 105-342 (TENRRTACVS…VTIRKSYGTT (238 aa)). Cysteine 112 and cysteine 347 form a disulfide bridge. Cysteine 119, cysteine 123, and cysteine 126 together coordinate [4Fe-4S] cluster. S-adenosyl-L-methionine-binding positions include 171–172 (GE), serine 204, 227–229 (SLH), and asparagine 304. The active-site S-methylcysteine intermediate is cysteine 347.

This sequence belongs to the radical SAM superfamily. RlmN family. It depends on [4Fe-4S] cluster as a cofactor.

The protein localises to the cytoplasm. The catalysed reaction is adenosine(2503) in 23S rRNA + 2 reduced [2Fe-2S]-[ferredoxin] + 2 S-adenosyl-L-methionine = 2-methyladenosine(2503) in 23S rRNA + 5'-deoxyadenosine + L-methionine + 2 oxidized [2Fe-2S]-[ferredoxin] + S-adenosyl-L-homocysteine. It carries out the reaction adenosine(37) in tRNA + 2 reduced [2Fe-2S]-[ferredoxin] + 2 S-adenosyl-L-methionine = 2-methyladenosine(37) in tRNA + 5'-deoxyadenosine + L-methionine + 2 oxidized [2Fe-2S]-[ferredoxin] + S-adenosyl-L-homocysteine. Its function is as follows. Specifically methylates position 2 of adenine 2503 in 23S rRNA and position 2 of adenine 37 in tRNAs. In Pelodictyon phaeoclathratiforme (strain DSM 5477 / BU-1), this protein is Probable dual-specificity RNA methyltransferase RlmN.